Here is a 380-residue protein sequence, read N- to C-terminus: Cytochrome b (380 aa).

4 helical membrane-spanning segments follow: residues 34-54, 78-99, 114-134, and 179-199; these read FGSL…LLAA, WLIR…YLHI, WNTG…GYVL, and FFTL…IHLT. Residues H84 and H98 each coordinate heme b. 2 residues coordinate heme b: H183 and H197. An a ubiquinone-binding site is contributed by H202. A run of 4 helical transmembrane segments spans residues 227 to 247, 289 to 309, 321 to 341, and 348 to 368; these read LKDI…ALFS, LGGV…PLLH, FSQL…WVGS, and FIII…ILFP.

It belongs to the cytochrome b family. The cytochrome bc1 complex contains 11 subunits: 3 respiratory subunits (MT-CYB, CYC1 and UQCRFS1), 2 core proteins (UQCRC1 and UQCRC2) and 6 low-molecular weight proteins (UQCRH/QCR6, UQCRB/QCR7, UQCRQ/QCR8, UQCR10/QCR9, UQCR11/QCR10 and a cleavage product of UQCRFS1). This cytochrome bc1 complex then forms a dimer. It depends on heme b as a cofactor.

Its subcellular location is the mitochondrion inner membrane. Its function is as follows. Component of the ubiquinol-cytochrome c reductase complex (complex III or cytochrome b-c1 complex) that is part of the mitochondrial respiratory chain. The b-c1 complex mediates electron transfer from ubiquinol to cytochrome c. Contributes to the generation of a proton gradient across the mitochondrial membrane that is then used for ATP synthesis. This chain is Cytochrome b (MT-CYB), found in Antigone vipio (White-naped crane).